The chain runs to 476 residues: Glycogen synthase (476 aa).

ADP-alpha-D-glucose is bound at residue K15.

It belongs to the glycosyltransferase 1 family. Bacterial/plant glycogen synthase subfamily.

The catalysed reaction is [(1-&gt;4)-alpha-D-glucosyl](n) + ADP-alpha-D-glucose = [(1-&gt;4)-alpha-D-glucosyl](n+1) + ADP + H(+). Its pathway is glycan biosynthesis; glycogen biosynthesis. Functionally, synthesizes alpha-1,4-glucan chains using ADP-glucose. The sequence is that of Glycogen synthase from Haemophilus influenzae (strain 86-028NP).